The sequence spans 413 residues: Serine hydroxymethyltransferase (413 aa).

Residues Leu117 and 121 to 123 contribute to the (6S)-5,6,7,8-tetrahydrofolate site; that span reads GHL. Residue Lys226 is modified to N6-(pyridoxal phosphate)lysine. (6S)-5,6,7,8-tetrahydrofolate is bound by residues Glu239 and 349–351; that span reads SPF.

The protein belongs to the SHMT family. As to quaternary structure, homodimer. The cofactor is pyridoxal 5'-phosphate.

Its subcellular location is the cytoplasm. The enzyme catalyses (6R)-5,10-methylene-5,6,7,8-tetrahydrofolate + glycine + H2O = (6S)-5,6,7,8-tetrahydrofolate + L-serine. It participates in one-carbon metabolism; tetrahydrofolate interconversion. Its pathway is amino-acid biosynthesis; glycine biosynthesis; glycine from L-serine: step 1/1. Catalyzes the reversible interconversion of serine and glycine with tetrahydrofolate (THF) serving as the one-carbon carrier. This reaction serves as the major source of one-carbon groups required for the biosynthesis of purines, thymidylate, methionine, and other important biomolecules. Also exhibits THF-independent aldolase activity toward beta-hydroxyamino acids, producing glycine and aldehydes, via a retro-aldol mechanism. The chain is Serine hydroxymethyltransferase from Bacillus cereus (strain G9842).